The chain runs to 140 residues: Nucleoside diphosphate kinase (140 aa).

K11, F59, R87, T93, R104, and N114 together coordinate ATP. H117 acts as the Pros-phosphohistidine intermediate in catalysis.

Belongs to the NDK family. In terms of assembly, homotetramer. Requires Mg(2+) as cofactor.

Its subcellular location is the cytoplasm. The catalysed reaction is a 2'-deoxyribonucleoside 5'-diphosphate + ATP = a 2'-deoxyribonucleoside 5'-triphosphate + ADP. It carries out the reaction a ribonucleoside 5'-diphosphate + ATP = a ribonucleoside 5'-triphosphate + ADP. Functionally, major role in the synthesis of nucleoside triphosphates other than ATP. The ATP gamma phosphate is transferred to the NDP beta phosphate via a ping-pong mechanism, using a phosphorylated active-site intermediate. The chain is Nucleoside diphosphate kinase from Mesorhizobium japonicum (strain LMG 29417 / CECT 9101 / MAFF 303099) (Mesorhizobium loti (strain MAFF 303099)).